A 191-amino-acid polypeptide reads, in one-letter code: Hypoxanthine/guanine phosphoribosyltransferase (191 aa).

It belongs to the purine/pyrimidine phosphoribosyltransferase family. Archaeal HPRT subfamily. In terms of assembly, homodimer.

The protein localises to the cytoplasm. It carries out the reaction IMP + diphosphate = hypoxanthine + 5-phospho-alpha-D-ribose 1-diphosphate. The catalysed reaction is GMP + diphosphate = guanine + 5-phospho-alpha-D-ribose 1-diphosphate. It functions in the pathway purine metabolism; IMP biosynthesis via salvage pathway; IMP from hypoxanthine: step 1/1. In terms of biological role, catalyzes a salvage reaction resulting in the formation of IMP that is energically less costly than de novo synthesis. The protein is Hypoxanthine/guanine phosphoribosyltransferase of Methanocella arvoryzae (strain DSM 22066 / NBRC 105507 / MRE50).